A 124-amino-acid polypeptide reads, in one-letter code: Small ribosomal subunit protein uS12 (124 aa).

Residues 1-24 form a disordered region; the sequence is MTTINQLVRKPRQATTYKSASPAL. Residue Asp89 is modified to 3-methylthioaspartic acid.

The protein belongs to the universal ribosomal protein uS12 family. Part of the 30S ribosomal subunit. Contacts proteins S8 and S17. May interact with IF1 in the 30S initiation complex.

Its function is as follows. With S4 and S5 plays an important role in translational accuracy. In terms of biological role, interacts with and stabilizes bases of the 16S rRNA that are involved in tRNA selection in the A site and with the mRNA backbone. Located at the interface of the 30S and 50S subunits, it traverses the body of the 30S subunit contacting proteins on the other side and probably holding the rRNA structure together. The combined cluster of proteins S8, S12 and S17 appears to hold together the shoulder and platform of the 30S subunit. This Xanthomonas axonopodis pv. citri (strain 306) protein is Small ribosomal subunit protein uS12.